The following is a 196-amino-acid chain: uncharacterized protein (196 aa).

A compositionally biased stretch (pro residues) spans 1–10; sequence MPGMVPPHVP. 2 disordered regions span residues 1 to 118 and 176 to 196; these read MPGM…EGSG and TEQA…SAPG. Residues 25-45 show a composition bias toward low complexity; the sequence is PVAPQVPSPGGAPGQGPYPYS. The span at 54–69 shows a compositional bias: polar residues; that stretch reads LDTSGKNLTEQNSYSN.

This is an uncharacterized protein from Homo sapiens (Human).